We begin with the raw amino-acid sequence, 277 residues long: MDTKRMLQNSVLALTDDTLISIGTVTNAAREVANDGVDQCDPQIITQASSLSKLPLEPSSVDIVIPIFRSIEFPGDLLVKEMFRVLKPGGTILIYSSQQSVIGETDKAISGLQRKLLLGGFLEAEALQPKPVGLSNVVCSFGVKAKKPSWNIGSSFALKKSIKSPVKVQNDDYSDLIDEDSLLTEEDLKKPQLPPVGDCEVGSTRKACKNCTCGRAEEEEKVKLGPTMDQLSNPQSACGSCGLGDAFRCGTCPYKGLPPFKLGEKVSLSENFLVADI.

An N-terminal SAM-like domain region spans residues 1 to 160 (MDTKRMLQNS…NIGSSFALKK (160 aa)). The segment at 161 to 188 (SIKSPVKVQNDDYSDLIDEDSLLTEEDL) is linker. 4 residues coordinate [2Fe-2S] cluster: cysteine 199, cysteine 208, cysteine 211, and cysteine 213. The interval 199–213 (CEVGSTRKACKNCTC) is fe-S binding site A. Residues cysteine 238, cysteine 241, cysteine 249, and cysteine 252 each coordinate [4Fe-4S] cluster. 2 short sequence motifs (cx2C motif) span residues 238–241 (CGSC) and 249–252 (CGTC). A fe-S binding site B region spans residues 238 to 252 (CGSCGLGDAFRCGTC).

Belongs to the anamorsin family. Monomer. It depends on [2Fe-2S] cluster as a cofactor. The cofactor is [4Fe-4S] cluster.

It localises to the cytoplasm. Its subcellular location is the mitochondrion intermembrane space. In terms of biological role, component of the cytosolic iron-sulfur (Fe-S) protein assembly (CIA) machinery. Required for the maturation of extramitochondrial Fe-S proteins. Part of an electron transfer chain functioning in an early step of cytosolic Fe-S biogenesis, facilitating the de novo assembly of a [4Fe-4S] cluster on the cytosolic Fe-S scaffold complex. Electrons are transferred from NADPH via a FAD- and FMN-containing diflavin oxidoreductase. Together with the diflavin oxidoreductase, also required for the assembly of the diferric tyrosyl radical cofactor of ribonucleotide reductase (RNR), probably by providing electrons for reduction during radical cofactor maturation in the catalytic small subunit. This Populus trichocarpa (Western balsam poplar) protein is Anamorsin homolog.